The sequence spans 525 residues: MSNTYGLERLGIINPGTIYRNLPMARLVEIALARGEGLLASNGALSVNTGKYTGRSPHDRYIVDTPAVHDSISWGAVNQPVSEATFERLYSRLTAYLQGKDLFVFDGFVGADPAYRMPIRIVNEYAWQNLFVHQLFIRPTAEELAGHEPRFTVICAPGFKAIPEEDGTRSEAFIILNFDRRLVIIGGTSYAGEMKKSIFTVMNYLLPEQGVCPMHCSANMGPAGDTALFFGLSGTGKTTLSADPERYLIGDDEHGWSDKGIFNFEGGCYAKCIKLSAEHEPQIWNAIRFGSVLENVMVDPDCRIIDYDSDALTENTRAAYPVDFIPNAVIPGVGGHPQTVVFLTADAFGVMPPIAKLTREQAMYYFLSGYTSKLAGTERGVTEPKATFSTCFGAPFLPRSPMVYANLLGERIARHNASVYLVNTGWTGGPYGTGRRMSLPYTRAMVRAALNGELDKVEFTPDPVFGFLVPKACPGVPAEILNPRNTWAETEKYDAMARKLASLFRENFAKFKDVPVSIQEAGVVG.

Positions 55, 190, and 196 each coordinate substrate. Residues lysine 196, histidine 215, and 231–239 contribute to the ATP site; that span reads GLSGTGKTT. Residues lysine 196 and histidine 215 each contribute to the Mn(2+) site. Aspartate 252 serves as a coordination point for Mn(2+). Residues glutamate 280, arginine 317, and threonine 442 each coordinate ATP. A substrate-binding site is contributed by arginine 317.

Belongs to the phosphoenolpyruvate carboxykinase (ATP) family. It depends on Mn(2+) as a cofactor.

The protein resides in the cytoplasm. It catalyses the reaction oxaloacetate + ATP = phosphoenolpyruvate + ADP + CO2. It participates in carbohydrate biosynthesis; gluconeogenesis. Involved in the gluconeogenesis. Catalyzes the conversion of oxaloacetate (OAA) to phosphoenolpyruvate (PEP) through direct phosphoryl transfer between the nucleoside triphosphate and OAA. This chain is Phosphoenolpyruvate carboxykinase (ATP) 1, found in Moorella thermoacetica (strain ATCC 39073 / JCM 9320).